A 194-amino-acid chain; its full sequence is Inosine triphosphate pyrophosphatase (194 aa).

10–15 (TGNANK) is an ITP binding site. A Mg(2+)-binding site is contributed by E41. ITP is bound by residues K54, 72–73 (DT), K89, 147–150 (FGWD), K172, and 177–178 (QR).

The protein belongs to the HAM1 NTPase family. Homodimer. The cofactor is Mg(2+). Requires Mn(2+) as cofactor.

Its subcellular location is the cytoplasm. The protein localises to the nucleus. It catalyses the reaction ITP + H2O = IMP + diphosphate + H(+). It carries out the reaction dITP + H2O = dIMP + diphosphate + H(+). The enzyme catalyses XTP + H2O = XMP + diphosphate + H(+). Functionally, pyrophosphatase that hydrolyzes non-canonical purine nucleotides such as inosine triphosphate (ITP), deoxyinosine triphosphate (dITP) or xanthosine 5'-triphosphate (XTP) to their respective monophosphate derivatives. The enzyme does not distinguish between the deoxy- and ribose forms. Probably excludes non-canonical purines from RNA and DNA precursor pools, thus preventing their incorporation into RNA and DNA and avoiding chromosomal lesions. The protein is Inosine triphosphate pyrophosphatase of Kluyveromyces lactis (strain ATCC 8585 / CBS 2359 / DSM 70799 / NBRC 1267 / NRRL Y-1140 / WM37) (Yeast).